Here is a 202-residue protein sequence, read N- to C-terminus: Nascent polypeptide-associated complex subunit alpha (202 aa).

Over residues 1–19 (MADPRVEELPDEEVPKTNV) the composition is skewed to basic and acidic residues. Residues 1–42 (MADPRVEELPDEEVPKTNVEDAGSSSESEAGDEPTIPGGAAV) are disordered. An NAC-A/B domain is found at 46–111 (SRNEKKARKA…AKIEDLNATA (66 aa)). The span at 117–126 (QQLAEAAANE) shows a compositional bias: low complexity. Positions 117–165 (QQLAEAAANEHAGHDHEHDHGKGKAPEAEAKKEEEEDDGEEVDESGLEA) are disordered. Positions 127–149 (HAGHDHEHDHGKGKAPEAEAKKE) are enriched in basic and acidic residues. The segment covering 150–162 (EEEDDGEEVDESG) has biased composition (acidic residues). The UBA domain occupies 163–202 (LEAKDIELVMAQANVSRKKAVKALRENDNDIVNSIMALSI).

The protein belongs to the NAC-alpha family. As to quaternary structure, part of the nascent polypeptide-associated complex (NAC), consisting of egd2 and egd1. NAC associates with ribosomes via egd1.

The protein resides in the cytoplasm. It localises to the nucleus. In terms of biological role, component of the nascent polypeptide-associated complex (NAC), a dynamic component of the ribosomal exit tunnel, protecting the emerging polypeptides from interaction with other cytoplasmic proteins to ensure appropriate nascent protein targeting. The NAC complex also promotes mitochondrial protein import by enhancing productive ribosome interactions with the outer mitochondrial membrane and blocks the inappropriate interaction of ribosomes translating non-secretory nascent polypeptides with translocation sites in the membrane of the endoplasmic reticulum. Egd2 may also be involved in transcription regulation. This is Nascent polypeptide-associated complex subunit alpha (egd2) from Aspergillus niger (strain ATCC MYA-4892 / CBS 513.88 / FGSC A1513).